Reading from the N-terminus, the 84-residue chain is Beta-defensin 119 (84 aa).

The first 21 residues, 1–21 (MKLLYLFLAILLAIEEPVISG), serve as a signal peptide directing secretion. 3 cysteine pairs are disulfide-bonded: Cys-28–Cys-55, Cys-35–Cys-49, and Cys-39–Cys-56.

Belongs to the beta-defensin family.

It localises to the secreted. Functionally, has antibacterial activity. In Hylobates lar (Lar gibbon), this protein is Beta-defensin 119 (DEFB119).